A 692-amino-acid polypeptide reads, in one-letter code: Threonine--tRNA ligase (692 aa).

Residues 2–59 (AEAHISITVNGEAKEVEASQTGVELFADDKNIIAVRLNGELRDLYTPLHDGDNVESVT) enclose the TGS domain. The segment at 255–561 (DHRKLGQEMD…LLEHYAGAFP (307 aa)) is catalytic. The Zn(2+) site is built by Cys360, His411, and His538.

It belongs to the class-II aminoacyl-tRNA synthetase family. In terms of assembly, homodimer. Requires Zn(2+) as cofactor.

The protein resides in the cytoplasm. The enzyme catalyses tRNA(Thr) + L-threonine + ATP = L-threonyl-tRNA(Thr) + AMP + diphosphate + H(+). In terms of biological role, catalyzes the attachment of threonine to tRNA(Thr) in a two-step reaction: L-threonine is first activated by ATP to form Thr-AMP and then transferred to the acceptor end of tRNA(Thr). Also edits incorrectly charged L-seryl-tRNA(Thr). The polypeptide is Threonine--tRNA ligase (Bifidobacterium animalis subsp. lactis (strain AD011)).